Reading from the N-terminus, the 58-residue chain is Small ribosomal subunit protein bS21 (58 aa).

The protein belongs to the bacterial ribosomal protein bS21 family.

This chain is Small ribosomal subunit protein bS21, found in Lacticaseibacillus paracasei (strain ATCC 334 / BCRC 17002 / CCUG 31169 / CIP 107868 / KCTC 3260 / NRRL B-441) (Lactobacillus paracasei).